The chain runs to 371 residues: Zinc finger CCCH domain-containing protein 21 (371 aa).

A disordered region spans residues 1–64 (MPPKQQPKAD…AAKKKKEEEK (64 aa)). Basic and acidic residues predominate over residues 10-23 (DLAKKQKQVEDKTF). The segment covering 34-46 (VQKYVQSLKQSVQ) has biased composition (polar residues). 2 C3H1-type zinc fingers span residues 88 to 115 (DPKSILCEFFKAGQCQKGFKCKFSHDLN) and 159 to 197 (KPTDIVCKYFLDAVEKKQYGWFWSCPNGGKECHYRHALP). Coiled coils occupy residues 205–237 (QMKALLEEESSKKLAVEDEIENERAKLQTATQM) and 283–317 (FVDDAEACEEYEREREQEETEQKAKNKEAEAGTSK). Residues 290 to 371 (CEEYEREREQ…IREPNDEGSS (82 aa)) form a disordered region. The segment covering 292-312 (EYEREREQEETEQKAKNKEAE) has biased composition (basic and acidic residues). Acidic residues predominate over residues 330–352 (NEEEEDDDDDDDDLDMDELDELE).

In Arabidopsis thaliana (Mouse-ear cress), this protein is Zinc finger CCCH domain-containing protein 21.